We begin with the raw amino-acid sequence, 569 residues long: Laccase-14 (569 aa).

The signal sequence occupies residues 1 to 33 (MEFKLNIPNTIIKTLQTIVFFLFVLLAFQIAEA). Plastocyanin-like domains lie at 41–157 (KIKS…PKRG) and 167–320 (REIP…YKGD). Residue Asn-87 is glycosylated (N-linked (GlcNAc...) asparagine). 4 residues coordinate Cu cation: His-91, His-93, His-136, and His-138. N-linked (GlcNAc...) asparagine glycosylation is found at Asn-190, Asn-249, Asn-336, Asn-374, Asn-395, Asn-430, and Asn-452. A Plastocyanin-like 3 domain is found at 420 to 553 (DFPRNPPTKF…NTVFIVKDGP (134 aa)). Cu cation contacts are provided by His-470, His-473, His-475, His-532, Cys-533, His-534, His-538, and Met-543.

Belongs to the multicopper oxidase family. The cofactor is Cu cation. In terms of tissue distribution, expressed at low levels in flowers and siliques.

The protein localises to the secreted. The protein resides in the extracellular space. It localises to the apoplast. The catalysed reaction is 4 hydroquinone + O2 = 4 benzosemiquinone + 2 H2O. Lignin degradation and detoxification of lignin-derived products. In Arabidopsis thaliana (Mouse-ear cress), this protein is Laccase-14 (LAC14).